The sequence spans 666 residues: MKQYAIQPANLEFNAEGTPVSRDFDDVYFSNDNGLEETRYVFLGGNQLEERFPLHPRPLFVVAESGFGTGLNFLTLWQAFSQFRDAHPEATLQRLHFISFEKFPLTQADLALAHQHWPELAPWAQQLHAQWPLPLAGCHRLILDDGRVTLDLWFGDINELTGKLDESLNQKVDAWFLDGFAPAKNPDMWTQNLFSTMARLARPGGTLATFTSAGFVRRGLQEAGFTMQKRKGFGRKREMLCGVMAHALTFPSPTPWFTRSGSAKRDVAIIGGGIASALLSLALLRRGWQVTLYCSDEQPAQGASGNRQGALYPLLSKHDAAINLFFPSAFTFARRLYDALPVTFDHDWCGVTQLGWDEKSQHKIDQMLSLALPDALAVAVDPDQAQQETGVATHCRGITYPAGGWLCPAQLTAALLALAATQGLRRHYTHTLTALSRQATGWQLQFAEGKAVEHEVVVLANGHQINHVDQTRPLPVYSVAGQVSHIPTTPALSALRQVLCYDGYLTPQNPATHQHCIGASYHRGSEETAYREDDQQQNRQRLIDCFPDAAWAKEVDISEKAARCGVRCATRDHLPMVGNVPDYDATLAQYAALARQKDAAERAPVYPDLFMLGALGSRGLCSAPLCAEILAAQMSEEPIPMDADTLAALNPNRLWVRKLLKGKAVK.

The segment at 1 to 245 (MKQYAIQPAN…KREMLCGVMA (245 aa)) is tRNA (mnm(5)s(2)U34)-methyltransferase. The interval 270–666 (IGGGIASALL…RKLLKGKAVK (397 aa)) is FAD-dependent cmnm(5)s(2)U34 oxidoreductase.

It in the N-terminal section; belongs to the methyltransferase superfamily. tRNA (mnm(5)s(2)U34)-methyltransferase family. The protein in the C-terminal section; belongs to the DAO family. FAD is required as a cofactor.

Its subcellular location is the cytoplasm. The enzyme catalyses 5-aminomethyl-2-thiouridine(34) in tRNA + S-adenosyl-L-methionine = 5-methylaminomethyl-2-thiouridine(34) in tRNA + S-adenosyl-L-homocysteine + H(+). Catalyzes the last two steps in the biosynthesis of 5-methylaminomethyl-2-thiouridine (mnm(5)s(2)U) at the wobble position (U34) in tRNA. Catalyzes the FAD-dependent demodification of cmnm(5)s(2)U34 to nm(5)s(2)U34, followed by the transfer of a methyl group from S-adenosyl-L-methionine to nm(5)s(2)U34, to form mnm(5)s(2)U34. In Citrobacter koseri (strain ATCC BAA-895 / CDC 4225-83 / SGSC4696), this protein is tRNA 5-methylaminomethyl-2-thiouridine biosynthesis bifunctional protein MnmC.